Here is a 300-residue protein sequence, read N- to C-terminus: 4-hydroxy-tetrahydrodipicolinate synthase (300 aa).

Pyruvate is bound at residue Thr55. Tyr143 (proton donor/acceptor) is an active-site residue. Residue Lys171 is the Schiff-base intermediate with substrate of the active site. Ile211 is a pyruvate binding site.

The protein belongs to the DapA family. Homotetramer; dimer of dimers.

Its subcellular location is the cytoplasm. It carries out the reaction L-aspartate 4-semialdehyde + pyruvate = (2S,4S)-4-hydroxy-2,3,4,5-tetrahydrodipicolinate + H2O + H(+). Its pathway is amino-acid biosynthesis; L-lysine biosynthesis via DAP pathway; (S)-tetrahydrodipicolinate from L-aspartate: step 3/4. Functionally, catalyzes the condensation of (S)-aspartate-beta-semialdehyde [(S)-ASA] and pyruvate to 4-hydroxy-tetrahydrodipicolinate (HTPA). This chain is 4-hydroxy-tetrahydrodipicolinate synthase, found in Mycobacterium bovis (strain ATCC BAA-935 / AF2122/97).